The chain runs to 6684 residues: Replicase polyprotein 1ab (6684 aa).

The region spanning 2-108 is the CoV Nsp1 globular domain; the sequence is SSKQFKILVN…DFDLKIARTG (107 aa). In terms of domain architecture, CoV Nsp2 N-terminal spans 111 to 349; sequence AIYVDQYMCG…KSLVACSVKR (239 aa). Zn(2+) contacts are provided by Cys240, Cys242, Cys259, and Cys260. Residues 240–260 form a C4 region; it reads CPCGSESSGVGDWTGFKTACC. In terms of domain architecture, CoV Nsp2 middle spans 378 to 773; it reads NVGLLFKKTP…CNAARNDIEI (396 aa). Positions 768–879 constitute a CoV Nsp2 C-terminal domain; the sequence is RNDIEIGGIP…VQRMYNKMGG (112 aa). Residues 882-983 enclose the Ubiquitin-like 1 domain; sequence KTVSFSEEVD…DGIMISQYDI (102 aa). The tract at residues 989-1032 is disordered; that stretch reads EKSEVSASSEEEEVESVEEDPENEIVEASEGAEGTSSQEEVETV. The segment covering 997 to 1015 has biased composition (acidic residues); that stretch reads SEEEEVESVEEDPENEIVE. One can recognise a Peptidase C16 1 domain in the interval 1055–1299; sequence PWAAAVDVQE…FKVEKVEQQP (245 aa). Catalysis depends on Cys1093, which acts as the For PL1-PRO activity. The C4-type 1; degenerate zinc-finger motif lies at 1164 to 1195; it reads CGCGEKEIVLERAVFKLTPLKESFNYGVCGDC. Catalysis depends on for PL1-PRO activity residues His1244 and Asp1257. Positions 1318–1489 constitute a Macro domain; sequence NDDLILPFYK…TIENFFSCSI (172 aa). Positions 1486–1542 constitute a Ubiquitin-like 2 domain; the sequence is SCSIPVNVTEDNVNHERVSVSFDKTYGEQLKGTVVIKDKDVTNQLPSAFDVGQKVIK. The 254-residue stretch at 1550–1803 folds into the Peptidase C16 2 domain; the sequence is AHYGFRDAAA…KVAASPKIVQ (254 aa). The For PL2-PRO activity role is filled by Cys1588. Zn(2+) contacts are provided by Cys1667, Cys1670, Cys1694, and His1696. A C4-type 2; atypical zinc finger spans residues 1667 to 1696; the sequence is CDKCAKVEKFVGPVVAAPLAIHGTDETCVH. Active-site for PL2-PRO activity residues include His1741 and Asp1754. The helical transmembrane segment at 1896–1916 threads the bilayer; sequence LVLLLIAIYNFFYLFVSIPVV. The tract at residues 1896-2053 is HD1; that stretch reads LVLLLIAIYN…LALKHIVFAC (158 aa). Residues 1905–1970 form the 3Ecto domain; it reads NFFYLFVSIP…LQVTWDFKSD (66 aa). 2 cysteine pairs are disulfide-bonded: Cys1921/Cys1948 and Cys1939/Cys1945. 2 consecutive transmembrane segments (helical) span residues 1995-2015 and 2033-2053; these read CFLM…FGYV and FVIV…VFAC. A Y1 region spans residues 2044 to 2134; that stretch reads LALKHIVFAC…SVKQTVYATD (91 aa). The region spanning 2044–2384 is the CoV Nsp3 Y domain; sequence LALKHIVFAC…PYERFTESVS (341 aa). Zn(2+) is bound by residues His2048, Cys2053, Cys2058, Cys2061, Cys2094, His2097, Cys2101, and Cys2104. Positions 2048–2061 are ZF1; the sequence is HIVFACSNPSCKTC. Residues 2094–2104 form a ZF2 region; the sequence is CKKHNFYCKNC. The Y2 stretch occupies residues 2135-2224; it reads RSHQEVTKVE…IVNSDLLEDL (90 aa). The interval 2135–2384 is coV-Y; sequence RSHQEVTKVE…PYERFTESVS (250 aa). The interval 2225–2281 is Y3; the sequence is SVDFKGALFNAKKNVIKNSFNVDVSECKNLDECYRACNLNVSFSTFEMAVNNAHRFG. The interval 2282-2384 is Y4; sequence ILITDRSFNN…PYERFTESVS (103 aa). 8 helical membrane-spanning segments follow: residues 2401–2421, 2467–2487, 2497–2517, 2538–2558, 2666–2686, 2695–2715, 2721–2741, and 2746–2766; these read IVIL…YSVA, YGFI…VFDL, PAYV…AFGV, CVFN…VYCA, GAML…YGVL, CTFL…SYFV, FMII…YPGI, and FIIA…ILVF. An HD2 region spans residues 2401-2766; it reads IVILVFVFIF…YVITAYILVF (366 aa). In terms of domain architecture, Nsp4C spans 2783–2878; it reads LFEGDKFVGN…PTVSVNSTLQ (96 aa). The Peptidase C30 domain maps to 2879–3180; sequence SGLRKMAQPS…IRQMYGVNLQ (302 aa). Residues His2919 and Cys3022 each act as for 3CL-PRO activity in the active site. Helical transmembrane passes span 3187–3207, 3217–3237, 3242–3262, 3280–3300, 3313–3333, 3347–3367, 3371–3391, and 3394–3414; these read FFYP…EFFM, TFVS…VSGI, LFFM…NLFW, MFLP…IVFV, WFSL…IFGT, FVNM…VVIA, IAYY…FGFM, and ISIV…ILYW. The HD3 stretch occupies residues 3187-3414; that stretch reads FFYPIMTAMT…FCCYYGILYW (228 aa). In terms of domain architecture, RdRp Nsp7 cofactor spans 3475–3557; sequence SKLTEMKCTN…SYFENTTILQ (83 aa). The RdRp Nsp8 cofactor domain maps to 3558-3752; that stretch reads SVASAYAALP…ITCERTTKLQ (195 aa). Residues 3753–3863 enclose the Nsp9 ssRNA-binding domain; sequence NNEIMPGKLK…GYIGATVRLQ (111 aa). The ExoN/MTase coactivator domain maps to 3864–4004; the sequence is AGKPTEHPSN…TSMQSFTVDQ (141 aa). Zn(2+) is bound by residues Cys3937, Cys3940, His3946, Cys3953, Cys3979, Cys3982, Cys3990, and Cys3992. Zinc fingers lie at residues 3937 to 3953 and 3979 to 3992; these read CIYC…DGLC and CVVC…GCMC. Residues 4006–4255 enclose the NiRAN domain; that stretch reads YLNRVRGSSA…ESENFVKSDI (250 aa). In terms of domain architecture, Nsp12 Interface spans 4261 to 4359; the sequence is KQYDLLAYDF…WNLDVKLDTM (99 aa). Zn(2+)-binding residues include His4290, Cys4296, Cys4301, Cys4305, and Cys4482. The region spanning 4360 to 4927 is the Nsp12 RNA-dependent RNA polymerase domain; it reads KLSMTDLLRF…SLYEKSTVLQ (568 aa). The segment at 4362–4576 is rdRp Fingers N-ter; it reads SMTDLLRFVT…HQKHLKSIAA (215 aa). The rdRp Palm N-ter stretch occupies residues 4577–4615; it reads TRNATVVIGSTKFYGGWDNMLKNLMRDVDNGCLMGWDYP. The RdRp catalytic domain maps to 4607 to 4769; it reads GCLMGWDYPK…CYNKDYADLG (163 aa). The rdRp Fingers C-ter stretch occupies residues 4616 to 4674; sequence KCDRALPNMIRMASAMILGSKHVGCCTHNDRFYRLSNELAQVLTEVVHCTGGFYFKPGG. 3 residues coordinate Zn(2+): His4637, Cys4640, and Cys4641. The segment at 4675–4810 is rdRp Palm C-ter; sequence TTSGDGTTAY…SVGPHEFCSQ (136 aa). Residues Ser4754, Asp4755, and Asp4756 contribute to the active site. Residues 4811 to 4927 are rdRp Thumb; the sequence is HTLQIVGPDG…SLYEKSTVLQ (117 aa). Residues 4928–5040 enclose the CV ZBD domain; sequence AAGMCVVCGS…EDFNKLAVSD (113 aa). Zn(2+) is bound by residues Cys4932, Cys4935, Cys4943, Cys4946, Cys4953, Cys4956, His4960, His4966, Cys4977, Cys4982, Cys4999, and His5002. The 192-residue stretch at 5175 to 5366 folds into the (+)RNA virus helicase ATP-binding domain; sequence NTISKLYPVF…MCTLGPDVFL (192 aa). 5210–5217 serves as a coordination point for ATP; it reads GPPGSGKS. The region spanning 5367-5536 is the (+)RNA virus helicase C-terminal domain; it reads HKCYRCPAEI…AKPETCGLFK (170 aa). An ExoN domain is found at 5598 to 5812; it reads LFCTRDFAMR…RCLAIHDCFV (215 aa). Residues Asp5616, Glu5618, and Glu5717 contribute to the active site. Positions 5733, 5735, 5751, 5754, 5782, 5786, and 5789 each coordinate Zn(2+). Catalysis depends on residues His5793 and Asp5798. Residue Cys5804 coordinates Zn(2+). Positions 5821 to 6042 constitute an N7-MTase domain; the sequence is YPFIDNEEKI…MLWHGFVNSK (222 aa). 5856-5862 is an S-adenosyl-L-methionine binding site; it reads DVGNPKG. Residues 5933-5947 are gpppA-binding; sequence CNGGALYVNNHAFHT. Positions 5971, 5988, 5999, and 6002 each coordinate Zn(2+). A Nsp15 N-terminal oligomerization domain is found at 6046 to 6106; that stretch reads SLENVAFNVV…NVAFELYAKR (61 aa). The AV-Nsp11N/CoV-Nsp15M domain maps to 6107 to 6224; that stretch reads KLGLTPPLTI…IYVRKNGEYV (118 aa). The region spanning 6241–6381 is the NendoU domain; that stretch reads KPRSTMEEDF…ENSHIKTFYP (141 aa). Residues His6271, His6286, Lys6327, Lys6429, Asp6513, Lys6553, and Glu6586 contribute to the active site. The 297-residue stretch at 6385–6681 folds into the Nidovirus-type SAM-dependent 2'-O-MTase domain; that stretch reads SAEWNPGYSM…KLLNFGNHFV (297 aa).

The protein belongs to the coronaviruses polyprotein 1ab family. In terms of assembly, 3CL-PRO exists as monomer and homodimer. Eight copies of nsp7 and eight copies of nsp8 assemble to form a heterohexadecamer. Nsp9 is a dimer. Nsp10 forms a dodecamer. Mn(2+) serves as cofactor. In terms of processing, specific enzymatic cleavages in vivo by its own proteases yield mature proteins. 3CL-PRO is autocatalytically processed.

It is found in the host membrane. Its subcellular location is the host cytoplasm. It localises to the host perinuclear region. The protein resides in the host endoplasmic reticulum-Golgi intermediate compartment. The catalysed reaction is Thiol-dependent hydrolysis of ester, thioester, amide, peptide and isopeptide bonds formed by the C-terminal Gly of ubiquitin (a 76-residue protein attached to proteins as an intracellular targeting signal).. It carries out the reaction RNA(n) + a ribonucleoside 5'-triphosphate = RNA(n+1) + diphosphate. It catalyses the reaction ATP + H2O = ADP + phosphate + H(+). The enzyme catalyses a 5'-end diphospho-ribonucleoside in mRNA + GTP + H(+) = a 5'-end (5'-triphosphoguanosine)-ribonucleoside in mRNA + diphosphate. The catalysed reaction is a 5'-end (N(7)-methyl 5'-triphosphoguanosine)-ribonucleoside in mRNA + S-adenosyl-L-methionine = a 5'-end (N(7)-methyl 5'-triphosphoguanosine)-(2'-O-methyl-ribonucleoside) in mRNA + S-adenosyl-L-homocysteine + H(+). It carries out the reaction uridylyl-uridylyl-ribonucleotide-RNA = a 3'-end uridylyl-2',3'-cyclophospho-uridine-RNA + a 5'-end dephospho-ribonucleoside-RNA. Its function is as follows. The replicase polyprotein of coronaviruses is a multifunctional protein: it contains the activities necessary for the transcription of negative stranded RNA, leader RNA, subgenomic mRNAs and progeny virion RNA as well as proteinases responsible for the cleavage of the polyprotein into functional products. Non-structural protein 1 inhibits host translation. By suppressing host gene expression, nsp1 facilitates efficient viral gene expression in infected cells and evasion from host immune response. In terms of biological role, the papain-like proteinase 1 (PLP1) and papain-like proteinase 2 (PLP2) are responsible for the cleavages located at the N-terminus of the replicase polyprotein. In addition, PLP2 possesses a deubiquitinating/deISGylating activity and processes both 'Lys-48'- and 'Lys-63'-linked polyubiquitin chains from cellular substrates. PLP2 also antagonizes innate immune induction of type I interferon by blocking the nuclear translocation of host IRF-3. Functionally, responsible for the majority of cleavages as it cleaves the C-terminus of replicase polyprotein at 11 sites. Recognizes substrates containing the core sequence [ILMVF]-Q-|-[SAGC]. Inhibited by the substrate-analog Cbz-Val-Asn-Ser-Thr-Leu-Gln-CMK. Its function is as follows. The helicase which contains a zinc finger structure displays RNA and DNA duplex-unwinding activities with 5' to 3' polarity. ATPase activity is strongly stimulated by poly(U), poly(dT), poly(C), poly(dA), but not by poly(G). The exoribonuclease acts on both ssRNA and dsRNA in a 3' to 5' direction. In terms of biological role, nsp7-nsp8 hexadecamer may possibly confer processivity to the polymerase, maybe by binding to dsRNA or by producing primers utilized by the latter. Functionally, forms a primer, NSP9-pU, which is utilized by the polymerase for the initiation of RNA chains. Interacts with ribosome signal recognition particle RNA (SRP). Together with NSP8, suppress protein integration into the cell membrane, thereby disrupting host immune defenses. Its function is as follows. RNA-directed RNA polymerase that catalyzes the transcription of viral genomic and subgenomic RNAs. Acts in complex with nsp7 and nsp8 to transcribe both the minus and positive strands of genomic RNA. The kinase-like NiRAN domain of NSP12 attaches one or more nucleotides to the amino terminus of NSP9, forming a covalent RNA-protein intermediate that serves as transcription/replication primer. Subgenomic RNAs (sgRNAs) are formed by discontinuous transcription: The polymerase has the ability to pause at transcription-regulating sequences (TRS) and jump to the leader TRS, resulting in a major deletion. This creates a series of subgenomic RNAs that are replicated, transcribed and translated. In addition, Nsp12 is a subunit of the viral RNA capping enzyme that catalyzes the RNA guanylyltransferase reaction for genomic and sub-genomic RNAs. Subsequently, the NiRAN domain transfers RNA to GDP, and forms the core cap structure GpppA-RNA. Plays a role in viral transcription/replication and prevents the simultaneous activation of host cell dsRNA sensors, such as MDA5/IFIH1, OAS, and PKR. Acts by degrading the 5'-polyuridines generated during replication of the poly(A) region of viral genomic and subgenomic RNAs. Catalyzes a two-step reaction in which a 2'3'-cyclic phosphate (2'3'-cP) is first generated by 2'-O transesterification, which is then hydrolyzed to a 3'-phosphate (3'-P). If not degraded, poly(U) RNA would hybridize with poly(A) RNA tails and activate host dsRNA sensors. This chain is Replicase polyprotein 1ab (rep), found in Sus scrofa (Pig).